The sequence spans 166 residues: MSKAMALRRLMKEYKELTENGPDGITAGPSNEDDFFTWDCLIQGPDGTPFEGGLYPATLKFPSDYPLGPPTLKFECEFFHPNVYKDGTVCISILHAPGDDPNMYESSSERWSPVQSVEKILLSVMSMLAEPNDESGANIDACKMWREDREEYCRVVRRLARKTLGL.

In terms of domain architecture, UBC core spans Met5–Gly165. Cys90 acts as the Glycyl thioester intermediate in catalysis. Cys90 is covalently cross-linked (Glycyl cysteine thioester (Cys-Gly) (interchain with G-Cter in ubiquitin)).

It belongs to the ubiquitin-conjugating enzyme family. Autoubiquitinated at Cys-90; undergoes 'Lys-48'-linked polyubiquitination, which leads to proteasome-dependent protein degradation.

The enzyme catalyses S-ubiquitinyl-[E1 ubiquitin-activating enzyme]-L-cysteine + [E2 ubiquitin-conjugating enzyme]-L-cysteine = [E1 ubiquitin-activating enzyme]-L-cysteine + S-ubiquitinyl-[E2 ubiquitin-conjugating enzyme]-L-cysteine.. The protein operates within protein modification; protein ubiquitination. Catalyzes the covalent attachment of ubiquitin to other proteins. Functions in degradation of misfolded or regulated proteins localized in the endoplasmic reticulum (ER) lumen or membrane via the ubiquitin-proteasome system. Cognate E2 conjugating enzyme for the doa10 ubiquitin ligase complex, which is part of the ERAD-C pathway responsible for the rapid degradation of membrane proteins with misfolded cytoplasmic domains, and of the hrd1 ubiquitin ligase complex, which is part of the ERAD-L and ERAD-M pathways responsible for the rapid degradation of soluble lumenal and membrane proteins with misfolded lumenal domains (ERAD-L), or ER-membrane proteins with misfolded transmembrane domains (ERAD-M). Together with hrd1, required for the degradation of the transcription factor sre1 precursor in the absence of its binding partner scp1. Has a role in the formation of chromatin structures that influence the localization of transcriptional silencing factors. In Schizosaccharomyces pombe (strain 972 / ATCC 24843) (Fission yeast), this protein is Ubiquitin-conjugating enzyme E2-18 kDa (ubc7).